The sequence spans 283 residues: Pantothenate synthetase (283 aa).

M30 to H37 serves as a coordination point for ATP. Residue H37 is the Proton donor of the active site. Q61 contributes to the (R)-pantoate binding site. Residue Q61 participates in beta-alanine binding. Position 149 to 152 (G149 to D152) interacts with ATP. Residue Q155 coordinates (R)-pantoate. L186–R189 contacts ATP.

This sequence belongs to the pantothenate synthetase family. In terms of assembly, homodimer.

The protein localises to the cytoplasm. It carries out the reaction (R)-pantoate + beta-alanine + ATP = (R)-pantothenate + AMP + diphosphate + H(+). It participates in cofactor biosynthesis; (R)-pantothenate biosynthesis; (R)-pantothenate from (R)-pantoate and beta-alanine: step 1/1. Its function is as follows. Catalyzes the condensation of pantoate with beta-alanine in an ATP-dependent reaction via a pantoyl-adenylate intermediate. The protein is Pantothenate synthetase of Escherichia coli (strain SMS-3-5 / SECEC).